The sequence spans 367 residues: GPN-loop GTPase 1 (367 aa).

Residues 15–22 (GMAGSGKT) and 18–23 (GSGKTT) contribute to the GTP site. Positions 75–77 (GPN) match the Gly-Pro-Asn (GPN)-loop; involved in dimer interface motif. 178-181 (NKCD) is a GTP binding site. A coiled-coil region spans residues 247–290 (EGMDDFLEAVKAKVKEYEEEYVPEMERMKEIQRQTKERQKEAQL). The tract at residues 306–332 (VGLTVSDAEDEYNGELVDPDEDDGLTA) is disordered. Ser-311 bears the Phosphoserine mark. The span at 312 to 332 (DAEDEYNGELVDPDEDDGLTA) shows a compositional bias: acidic residues.

This sequence belongs to the GPN-loop GTPase family. Heterodimers with gpn2 or fet5/gpn3. Binds to RNA polymerase II (RNAPII).

Its subcellular location is the cytoplasm. Small GTPase required for proper nuclear import of RNA polymerase II (RNAPII). May act at an RNAP assembly step prior to nuclear import. The protein is GPN-loop GTPase 1 of Schizosaccharomyces pombe (strain 972 / ATCC 24843) (Fission yeast).